The chain runs to 627 residues: Protein fem-1 homolog B (627 aa).

ANK repeat units lie at residues 45 to 74 (QRST…VQTQ), 87 to 116 (DGAT…NVNH), 120 to 149 (TNST…NISI), 153 to 182 (YDNT…DPNA), 186 to 215 (CGAT…AMMV), and 218 to 248 (HGMT…NRRS). The stretch at 344-377 (SHPIIYRGAVYADNMEFEQCIKLWLHALHLRQKG) is one TPR repeat. ANK repeat units lie at residues 483 to 527 (DGST…DVNA) and 531 to 568 (EGNS…HTDM).

This sequence belongs to the fem-1 family. Component of a CRL2 E3 ubiquitin-protein ligase complex, also named ECS (Elongin BC-CUL2/5-SOCS-box protein) complex.

Its subcellular location is the cytoplasm. It localises to the nucleus. It functions in the pathway protein modification; protein ubiquitination. In terms of biological role, substrate-recognition component of a Cul2-RING (CRL2) E3 ubiquitin-protein ligase complex of the DesCEND (destruction via C-end degrons) pathway, which recognizes a C-degron located at the extreme C terminus of target proteins, leading to their ubiquitination and degradation. The C-degron recognized by the DesCEND pathway is usually a motif of less than ten residues and can be present in full-length proteins, truncated proteins or proteolytically cleaved forms. The CRL2(FEM1B) complex specifically recognizes proteins ending with -Gly-Leu-Asp-Arg, leading to their ubiquitination and degradation. The chain is Protein fem-1 homolog B from Gallus gallus (Chicken).